A 149-amino-acid chain; its full sequence is Large ribosomal subunit protein bL9 (149 aa).

This sequence belongs to the bacterial ribosomal protein bL9 family.

Binds to the 23S rRNA. In Christiangramia forsetii (strain DSM 17595 / CGMCC 1.15422 / KT0803) (Gramella forsetii), this protein is Large ribosomal subunit protein bL9.